The primary structure comprises 309 residues: MILTVTLNPAIDVSYPLDELKCDTVNRVVDVTKTPGGKGLNVCRVLNDFGETVKATGCIGGESGDFIINHLPDSILSRFYKISGDTRTCIAILHEGNQTEILEKGPLLSVEEIDGFTHHFKYLLNDVDVVTLSGSLPAGMPDDYYQKLIGIANLNGKKTVLDCSGNALEAVLKGDSKPTVIKPNLEELSQLLGKEMTKDFEALKEVLQDELFEGIEWIIVSLGADGVFAKHNDTFYNVDIPKIEIVSAVGSGDSTVAGIASGLANDEDDRALLTKANVLGMLNAQEKTTGHVNMANYDKLYQSIKVKEV.

It belongs to the carbohydrate kinase PfkB family. LacC subfamily.

The enzyme catalyses D-tagatofuranose 6-phosphate + ATP = D-tagatofuranose 1,6-bisphosphate + ADP + H(+). Its pathway is carbohydrate metabolism; D-tagatose 6-phosphate degradation; D-glyceraldehyde 3-phosphate and glycerone phosphate from D-tagatose 6-phosphate: step 1/2. The sequence is that of Tagatose-6-phosphate kinase from Streptococcus pyogenes serotype M18 (strain MGAS8232).